We begin with the raw amino-acid sequence, 307 residues long: Transcription initiation factor IIF subunit beta (307 aa).

The span at Met-1–Glu-12 shows a compositional bias: basic and acidic residues. 2 disordered regions span residues Met-1–Asp-22 and Val-261–Val-307. Residues Asp-13–Asp-22 show a composition bias toward acidic residues. Residues Leu-263 to Thr-290 are compositionally biased toward polar residues. Positions Ala-292–Val-307 are enriched in acidic residues.

It belongs to the TFIIF beta subunit family. As to quaternary structure, component of the fcp1/TFIIF/polII complex via interaction of tfg3 with both tfg1/TFIIF-alpha and tfg2/TFIIF-beta subunits.

It is found in the nucleus. TFIIF is a general transcription initiation factor that binds to RNA polymerase II and helps to recruit it to the initiation complex in collaboration with TFIIB. It promotes transcription elongation. This chain is Transcription initiation factor IIF subunit beta (tfg2), found in Schizosaccharomyces pombe (strain 972 / ATCC 24843) (Fission yeast).